The chain runs to 602 residues: Elongation factor 4 (602 aa).

Residues 2–184 (NHIRNFSIIA…LIVAKVPAPR (183 aa)) form the tr-type G domain. Residues 14–19 (DHGKST) and 131–134 (NKMD) each bind GTP.

The protein belongs to the TRAFAC class translation factor GTPase superfamily. Classic translation factor GTPase family. LepA subfamily.

It localises to the cell inner membrane. The catalysed reaction is GTP + H2O = GDP + phosphate + H(+). Required for accurate and efficient protein synthesis under certain stress conditions. May act as a fidelity factor of the translation reaction, by catalyzing a one-codon backward translocation of tRNAs on improperly translocated ribosomes. Back-translocation proceeds from a post-translocation (POST) complex to a pre-translocation (PRE) complex, thus giving elongation factor G a second chance to translocate the tRNAs correctly. Binds to ribosomes in a GTP-dependent manner. The polypeptide is Elongation factor 4 (Paracidovorax citrulli (strain AAC00-1) (Acidovorax citrulli)).